Reading from the N-terminus, the 319-residue chain is ADP-L-glycero-D-manno-heptose-6-epimerase (319 aa).

Residues 10–11 (FI), 31–32 (DD), Lys38, Lys53, and 79–83 (EGACS) contribute to the NADP(+) site. Catalysis depends on Tyr144, which acts as the Proton acceptor. Lys148 is a binding site for NADP(+). Asn173 provides a ligand contact to substrate. NADP(+) is bound by residues Val174 and Lys182. The Proton acceptor role is filled by Lys182. Substrate-binding positions include Ser184, His191, 205 to 208 (FEGC), Arg218, and Tyr282.

Belongs to the NAD(P)-dependent epimerase/dehydratase family. HldD subfamily. Homopentamer. NADP(+) is required as a cofactor.

The enzyme catalyses ADP-D-glycero-beta-D-manno-heptose = ADP-L-glycero-beta-D-manno-heptose. It functions in the pathway nucleotide-sugar biosynthesis; ADP-L-glycero-beta-D-manno-heptose biosynthesis; ADP-L-glycero-beta-D-manno-heptose from D-glycero-beta-D-manno-heptose 7-phosphate: step 4/4. Its function is as follows. Catalyzes the interconversion between ADP-D-glycero-beta-D-manno-heptose and ADP-L-glycero-beta-D-manno-heptose via an epimerization at carbon 6 of the heptose. The chain is ADP-L-glycero-D-manno-heptose-6-epimerase from Aeromonas salmonicida (strain A449).